A 154-amino-acid chain; its full sequence is Lipoprotein signal peptidase (154 aa).

Transmembrane regions (helical) follow at residues 55 to 75 (GQFWLFYLITVIVVAAIVIYI) and 85 to 105 (AGVGLGLMLGGAIGNFLDRVF). Active-site residues include D111 and D129. Residues 127-147 (VADSALTVGVILLFVHMFFFA) form a helical membrane-spanning segment.

This sequence belongs to the peptidase A8 family.

It is found in the cell membrane. It catalyses the reaction Release of signal peptides from bacterial membrane prolipoproteins. Hydrolyzes -Xaa-Yaa-Zaa-|-(S,diacylglyceryl)Cys-, in which Xaa is hydrophobic (preferably Leu), and Yaa (Ala or Ser) and Zaa (Gly or Ala) have small, neutral side chains.. It participates in protein modification; lipoprotein biosynthesis (signal peptide cleavage). Its function is as follows. This protein specifically catalyzes the removal of signal peptides from prolipoproteins. The polypeptide is Lipoprotein signal peptidase (Geobacillus kaustophilus (strain HTA426)).